We begin with the raw amino-acid sequence, 360 residues long: Luc7-like protein (360 aa).

Residues 143–206 adopt a coiled-coil conformation; the sequence is KEQNSKITEL…QEKNENKRMS (64 aa). Residues 255-360 form a disordered region; that stretch reads LGRTDFYNAP…DDRRKRDRNY (106 aa). A compositionally biased stretch (basic and acidic residues) spans 269-293; the sequence is DSYRDDRRSSSSSYHDIDGRRDHRY. Residues 312–321 show a composition bias toward low complexity; the sequence is NNGRGSSRDN. The segment covering 329 to 360 has biased composition (basic and acidic residues); the sequence is RDYRNDHGKDYDRKRERDYYNDDDRRKRDRNY.

Belongs to the Luc7 family.

It is found in the nucleus. Functionally, may play a role in RNA splicing. The polypeptide is Luc7-like protein (crop) (Dictyostelium discoideum (Social amoeba)).